The following is a 152-amino-acid chain: Small ribosomal subunit protein uS5 (152 aa).

One can recognise an S5 DRBM domain in the interval 14–77 (FEEVIVNIGR…DDAHKNLVKV (64 aa)).

Belongs to the universal ribosomal protein uS5 family. As to quaternary structure, part of the 30S ribosomal subunit. Contacts proteins S4 and S8.

With S4 and S12 plays an important role in translational accuracy. Functionally, located at the back of the 30S subunit body where it stabilizes the conformation of the head with respect to the body. This is Small ribosomal subunit protein uS5 from Sulfurovum sp. (strain NBC37-1).